The primary structure comprises 370 residues: DNA replication and repair protein RecF (370 aa).

30 to 37 (GENAQGKT) serves as a coordination point for ATP.

It belongs to the RecF family.

It localises to the cytoplasm. The RecF protein is involved in DNA metabolism; it is required for DNA replication and normal SOS inducibility. RecF binds preferentially to single-stranded, linear DNA. It also seems to bind ATP. This is DNA replication and repair protein RecF from Listeria innocua serovar 6a (strain ATCC BAA-680 / CLIP 11262).